The following is a 1136-amino-acid chain: Nucleoporin nup120 (1136 aa).

In terms of assembly, component of the npc107-120 complex which consists of nup85, nup107, nup120, nup131, nup132 and seh1. Interacts with nup107.

It is found in the nucleus. Functionally, functions as a component of the nuclear pore complex (NPC). NPC components, collectively referred to as nucleoporins (NUPs), can play the role of both NPC structural components and of docking or interaction partners for transiently associated nuclear transport factors. Active directional transport is assured by both, a Phe-Gly (FG) repeat affinity gradient for these transport factors across the NPC and a transport cofactor concentration gradient across the nuclear envelope. The protein is Nucleoporin nup120 (nup120) of Schizosaccharomyces pombe (strain 972 / ATCC 24843) (Fission yeast).